Consider the following 602-residue polypeptide: Elongation factor 4 (602 aa).

The 183-residue stretch at 7–189 (KYIRNFSIVA…AIVNKVPAPD (183 aa)) folds into the tr-type G domain. Residues 19 to 24 (DHGKST) and 136 to 139 (NKID) contribute to the GTP site.

This sequence belongs to the TRAFAC class translation factor GTPase superfamily. Classic translation factor GTPase family. LepA subfamily.

It is found in the cell membrane. The enzyme catalyses GTP + H2O = GDP + phosphate + H(+). In terms of biological role, required for accurate and efficient protein synthesis under certain stress conditions. May act as a fidelity factor of the translation reaction, by catalyzing a one-codon backward translocation of tRNAs on improperly translocated ribosomes. Back-translocation proceeds from a post-translocation (POST) complex to a pre-translocation (PRE) complex, thus giving elongation factor G a second chance to translocate the tRNAs correctly. Binds to ribosomes in a GTP-dependent manner. The sequence is that of Elongation factor 4 from Clostridium botulinum (strain Kyoto / Type A2).